The primary structure comprises 814 residues: Oxysterol-binding protein-related protein 1C (814 aa).

The PH domain maps to 103–235; sequence GNGIAGILYK…WVEALQAVKD (133 aa). Positions 300–367 form a coiled coil; sequence LLIDTLRQLE…AEEEFDEEEN (68 aa). Disordered stretches follow at residues 319–366 and 379–411; these read VVDE…DEEE and SSFK…PSIK. Acidic residues predominate over residues 347-366; sequence ESDDDNERGDAAEEEFDEEE. Residues 379-394 show a composition bias toward low complexity; the sequence is SSFKSSGSGFRTSSFS. A compositionally biased stretch (acidic residues) spans 395–407; the sequence is SDEDGFESEDDID.

Belongs to the OSBP family. As to expression, expressed in roots, leaves, stems, flowers and pollen.

May be involved in the transport of sterols. This chain is Oxysterol-binding protein-related protein 1C (ORP1C), found in Arabidopsis thaliana (Mouse-ear cress).